We begin with the raw amino-acid sequence, 160 residues long: Zinc finger A20 and AN1 domain-containing stress-associated protein 6 (160 aa).

The A20-type zinc finger occupies 18 to 52 (PEAPILCVNNCGFFGSRMTENMCSKCYRDTVKAKT). 4 residues coordinate Zn(2+): C24, C28, C40, and C43. Residues 73-94 (EVTDGGSGSVADGKQVMEEDTP) form a disordered region. The AN1-type zinc-finger motif lies at 95–141 (KPPSNRCLSCRKKVGLTGFKCRCGGTFCSMHRYADSHKCTFDYKQVG). The Zn(2+) site is built by C101, C104, C115, C117, C122, H125, H131, and C133.

May be involved in environmental stress response. This Oryza sativa subsp. japonica (Rice) protein is Zinc finger A20 and AN1 domain-containing stress-associated protein 6 (SAP6).